We begin with the raw amino-acid sequence, 134 residues long: Thioredoxin-like protein Clot (134 aa).

One can recognise a Thioredoxin domain in the interval 1-134 (MTLKKVDANP…LILPLLAPST (134 aa)). Active-site nucleophile residues include cysteine 48 and cysteine 51. Cysteine 48 and cysteine 51 are joined by a disulfide.

This sequence belongs to the thioredoxin family.

Functionally, probable thiol-disulfide oxidoreductase that may participate in various redox reactions. The chain is Thioredoxin-like protein Clot from Arabidopsis thaliana (Mouse-ear cress).